The primary structure comprises 260 residues: Proliferating cell nuclear antigen (260 aa).

The DNA-binding element occupies 61–80 (RCDRNLAMGVNLSSMSKILK). A Glycyl lysine isopeptide (Lys-Gly) (interchain with G-Cter in ubiquitin) cross-link involves residue Lys164. 2 positions are modified to phosphoserine: Ser259 and Ser260.

The protein belongs to the PCNA family. As to quaternary structure, homotrimer. Forms a complex with activator 1 heteropentamer in the presence of ATP. Component of the replisome complex. Monoubiquitinated by the ube2b-rad18 complex on Lys-164. Monoubiquitination at Lys-164 also takes place in undamaged proliferating cells, and is mediated by the dcx(dtl) complex, leading to enhance PCNA-dependent translesion DNA synthesis.

The protein resides in the nucleus. Its function is as follows. This protein is an auxiliary protein of DNA polymerase delta and is involved in the control of eukaryotic DNA replication by increasing the polymerase's processibility during elongation of the leading strand. This chain is Proliferating cell nuclear antigen (pcna), found in Danio rerio (Zebrafish).